The following is a 49-amino-acid chain: Large ribosomal subunit protein bL33 (49 aa).

It belongs to the bacterial ribosomal protein bL33 family.

The sequence is that of Large ribosomal subunit protein bL33 from Syntrophus aciditrophicus (strain SB).